Here is a 191-residue protein sequence, read N- to C-terminus: Signal peptidase complex catalytic subunit sec11 (191 aa).

The Cytoplasmic segment spans residues 1–14; that stretch reads MLSFLSSNISNARQ. A helical; Signal-anchor for type II membrane protein transmembrane segment spans residues 15-33; sequence TLAQVLNFALVLSSAFMMW. Residues 34 to 191 are Lumenal-facing; the sequence is KGLSVFTGSS…MGVMVMLQRE (158 aa). Active-site charge relay system residues include S53, H92, and D133. Positions 177–188 are C-terminal short (CTS) helix; the sequence is VLLGIMGVMVML.

This sequence belongs to the peptidase S26B family. Component of the signal peptidase complex (SPC) composed of a catalytic subunit SEC11 and three accessory subunits SPC1, SPC2 and SPC3. The complex induces a local thinning of the ER membrane which is used to measure the length of the signal peptide (SP) h-region of protein substrates. This ensures the selectivity of the complex towards h-regions shorter than 18-20 amino acids. SPC associates with the translocon complex.

It localises to the endoplasmic reticulum membrane. The catalysed reaction is Cleavage of hydrophobic, N-terminal signal or leader sequences from secreted and periplasmic proteins.. In terms of biological role, catalytic component of the signal peptidase complex (SPC) which catalyzes the cleavage of N-terminal signal sequences from nascent proteins as they are translocated into the lumen of the endoplasmic reticulum. Specifically cleaves N-terminal signal peptides that contain a hydrophobic alpha-helix (h-region) shorter than 18-20 amino acids. The sequence is that of Signal peptidase complex catalytic subunit sec11 (sec11) from Aspergillus terreus (strain NIH 2624 / FGSC A1156).